The primary structure comprises 379 residues: MPTAIPADSVGLVSPQVAHFAEPLTLACGRTLADYQLIYETYGELNAARSNAVLICHALSGHHHAAGYHSEDDRKPGWWDSCIGPGKAIDTDRFFVVSLNNLGGCNGSTGPSSTNPATGKPYGADFPVVTVEDWVHSQARLADRLGINQWAAVVGGSLGGMQALQWAISYPERVRHCLAIASAPKLSAQNIAFNEVARQAILSDPEFHGGHFQEMGVIPKRGLMLARMVGHITYLSDDAMGTKFGRGLKSEKLNYDFNSVEFQVESYLRYQGEEFSGRFDANTYLLMTKALDYFDPAAANDDDLARTFEVAQADFCVMSFTTDWRFSPERSREIVDALLAARKNVCYLEIDAPQGHDAFLIPNPRYLQAFRGYMNRIAV.

The 310-residue stretch at 51 to 360 folds into the AB hydrolase-1 domain; it reads NAVLICHALS…DAPQGHDAFL (310 aa). Catalysis depends on Ser-157, which acts as the Nucleophile. Arg-227 serves as a coordination point for substrate. Catalysis depends on residues Asp-323 and His-356. Asp-357 lines the substrate pocket.

It belongs to the AB hydrolase superfamily. MetX family. In terms of assembly, homodimer.

The protein resides in the cytoplasm. It carries out the reaction L-homoserine + succinyl-CoA = O-succinyl-L-homoserine + CoA. It participates in amino-acid biosynthesis; L-methionine biosynthesis via de novo pathway; O-succinyl-L-homoserine from L-homoserine: step 1/1. Functionally, transfers a succinyl group from succinyl-CoA to L-homoserine, forming succinyl-L-homoserine. The protein is Homoserine O-succinyltransferase of Stutzerimonas stutzeri (strain A1501) (Pseudomonas stutzeri).